The primary structure comprises 47 residues: Photosystem II reaction center protein K (47 aa).

Positions 1–10 are excised as a propeptide; sequence MALINFDLLA. Residues 26-46 form a helical membrane-spanning segment; it reads LPLIPLFFFLLVFVWQAAVGF.

The protein belongs to the PsbK family. In terms of assembly, PSII is composed of 1 copy each of membrane proteins PsbA, PsbB, PsbC, PsbD, PsbE, PsbF, PsbH, PsbI, PsbJ, PsbK, PsbL, PsbM, PsbT, PsbX, PsbY, Psb30/Ycf12, peripheral proteins PsbO, CyanoQ (PsbQ), PsbU, PsbV and a large number of cofactors. It forms dimeric complexes.

Its subcellular location is the cellular thylakoid membrane. Functionally, one of the components of the core complex of photosystem II (PSII). PSII is a light-driven water:plastoquinone oxidoreductase that uses light energy to abstract electrons from H(2)O, generating O(2) and a proton gradient subsequently used for ATP formation. It consists of a core antenna complex that captures photons, and an electron transfer chain that converts photonic excitation into a charge separation. The protein is Photosystem II reaction center protein K of Prochlorococcus marinus (strain NATL2A).